We begin with the raw amino-acid sequence, 205 residues long: Adenylyl-sulfate kinase (205 aa).

Residue 31–38 coordinates ATP; sequence GLSGSGKS. Ser-105 serves as the catalytic Phosphoserine intermediate.

The protein belongs to the APS kinase family.

It catalyses the reaction adenosine 5'-phosphosulfate + ATP = 3'-phosphoadenylyl sulfate + ADP + H(+). It functions in the pathway sulfur metabolism; hydrogen sulfide biosynthesis; sulfite from sulfate: step 2/3. Its function is as follows. Catalyzes the synthesis of activated sulfate. The sequence is that of Adenylyl-sulfate kinase from Shewanella halifaxensis (strain HAW-EB4).